A 786-amino-acid chain; its full sequence is Probable aminopeptidase 1 (786 aa).

Substrate contacts are provided by residues Glu-103 and Gly-235 to Asn-239. His-270 serves as a coordination point for Zn(2+). Catalysis depends on Glu-271, which acts as the Proton acceptor. Positions 274 and 293 each coordinate Zn(2+).

This sequence belongs to the peptidase M1 family. It depends on Zn(2+) as a cofactor.

It is found in the cytoplasm. This is Probable aminopeptidase 1 (ape1) from Sulfurisphaera tokodaii (strain DSM 16993 / JCM 10545 / NBRC 100140 / 7) (Sulfolobus tokodaii).